Consider the following 205-residue polypeptide: GTP cyclohydrolase-2 (205 aa).

Residue Arg49–Glu53 coordinates GTP. Residues Cys54, Cys65, and Cys67 each contribute to the Zn(2+) site. GTP-binding positions include Gln70, Glu92–Arg94, and Thr114. Residue Asp126 is the Proton acceptor of the active site. Residue Arg128 is the Nucleophile of the active site. The GTP site is built by Thr149 and Lys154.

This sequence belongs to the GTP cyclohydrolase II family. It depends on Zn(2+) as a cofactor.

The enzyme catalyses GTP + 4 H2O = 2,5-diamino-6-hydroxy-4-(5-phosphoribosylamino)-pyrimidine + formate + 2 phosphate + 3 H(+). It functions in the pathway cofactor biosynthesis; riboflavin biosynthesis; 5-amino-6-(D-ribitylamino)uracil from GTP: step 1/4. In terms of biological role, catalyzes the conversion of GTP to 2,5-diamino-6-ribosylamino-4(3H)-pyrimidinone 5'-phosphate (DARP), formate and pyrophosphate. This Shewanella woodyi (strain ATCC 51908 / MS32) protein is GTP cyclohydrolase-2.